The chain runs to 337 residues: Ribosomal RNA small subunit methyltransferase H (337 aa).

S-adenosyl-L-methionine contacts are provided by residues 36–38 (GGH), aspartate 56, phenylalanine 82, aspartate 100, and glutamine 107. The disordered stretch occupies residues 314–337 (GLERRSGRIPNPRSPIPASQGDAR).

Belongs to the methyltransferase superfamily. RsmH family.

The protein resides in the cytoplasm. It carries out the reaction cytidine(1402) in 16S rRNA + S-adenosyl-L-methionine = N(4)-methylcytidine(1402) in 16S rRNA + S-adenosyl-L-homocysteine + H(+). Specifically methylates the N4 position of cytidine in position 1402 (C1402) of 16S rRNA. This is Ribosomal RNA small subunit methyltransferase H from Xanthomonas oryzae pv. oryzae (strain PXO99A).